The following is a 94-amino-acid chain: Small ribosomal subunit protein bS18 (94 aa).

The protein belongs to the bacterial ribosomal protein bS18 family. In terms of assembly, part of the 30S ribosomal subunit. Forms a tight heterodimer with protein bS6.

Functionally, binds as a heterodimer with protein bS6 to the central domain of the 16S rRNA, where it helps stabilize the platform of the 30S subunit. The sequence is that of Small ribosomal subunit protein bS18 from Rickettsia bellii (strain OSU 85-389).